The following is a 579-amino-acid chain: V-type ATP synthase alpha chain (579 aa).

Residue 238-245 coordinates ATP; that stretch reads GPFGAGKT.

Belongs to the ATPase alpha/beta chains family.

The enzyme catalyses ATP + H2O + 4 H(+)(in) = ADP + phosphate + 5 H(+)(out). Functionally, produces ATP from ADP in the presence of a proton gradient across the membrane. The V-type alpha chain is a catalytic subunit. In Borrelia hermsii (strain HS1 / DAH), this protein is V-type ATP synthase alpha chain.